The chain runs to 1414 residues: DNA-directed RNA polymerase subunit beta'' (1414 aa).

The Zn(2+) site is built by Cys-220, Cys-293, Cys-300, and Cys-303.

This sequence belongs to the RNA polymerase beta' chain family. RpoC2 subfamily. In plastids the minimal PEP RNA polymerase catalytic core is composed of four subunits: alpha, beta, beta', and beta''. When a (nuclear-encoded) sigma factor is associated with the core the holoenzyme is formed, which can initiate transcription. It depends on Zn(2+) as a cofactor.

The protein resides in the plastid. Its subcellular location is the chloroplast. It catalyses the reaction RNA(n) + a ribonucleoside 5'-triphosphate = RNA(n+1) + diphosphate. DNA-dependent RNA polymerase catalyzes the transcription of DNA into RNA using the four ribonucleoside triphosphates as substrates. In Angiopteris evecta (Mule's foot fern), this protein is DNA-directed RNA polymerase subunit beta''.